A 354-amino-acid polypeptide reads, in one-letter code: Thiamine thiazole synthase (354 aa).

Residues Ala83, 104–105 (EA), Gly112, and Val177 contribute to the substrate site. Residue Cys210 is modified to 2,3-didehydroalanine (Cys). Residues Asp212, His227, Met305, and 315–317 (RMR) contribute to the substrate site.

This sequence belongs to the THI4 family. In terms of assembly, homooctamer. Requires Fe cation as cofactor. In terms of processing, during the catalytic reaction, a sulfide is transferred from Cys-210 to a reaction intermediate, generating a dehydroalanine residue.

Its subcellular location is the cytoplasm. The protein localises to the nucleus. It catalyses the reaction [ADP-thiazole synthase]-L-cysteine + glycine + NAD(+) = [ADP-thiazole synthase]-dehydroalanine + ADP-5-ethyl-4-methylthiazole-2-carboxylate + nicotinamide + 3 H2O + 2 H(+). In terms of biological role, involved in biosynthesis of the thiamine precursor thiazole. Catalyzes the conversion of NAD and glycine to adenosine diphosphate 5-(2-hydroxyethyl)-4-methylthiazole-2-carboxylic acid (ADT), an adenylated thiazole intermediate. The reaction includes an iron-dependent sulfide transfer from a conserved cysteine residue of the protein to a thiazole intermediate. The enzyme can only undergo a single turnover, which suggests it is a suicide enzyme. May have additional roles in adaptation to various stress conditions and in DNA damage tolerance. The protein is Thiamine thiazole synthase of Candida albicans (strain WO-1) (Yeast).